The chain runs to 379 residues: UDP-4-amino-4-deoxy-L-arabinose--oxoglutarate aminotransferase (379 aa).

The residue at position 183 (lysine 183) is an N6-(pyridoxal phosphate)lysine.

This sequence belongs to the DegT/DnrJ/EryC1 family. ArnB subfamily. Homodimer. Requires pyridoxal 5'-phosphate as cofactor.

The enzyme catalyses UDP-4-amino-4-deoxy-beta-L-arabinose + 2-oxoglutarate = UDP-beta-L-threo-pentopyranos-4-ulose + L-glutamate. Its pathway is nucleotide-sugar biosynthesis; UDP-4-deoxy-4-formamido-beta-L-arabinose biosynthesis; UDP-4-deoxy-4-formamido-beta-L-arabinose from UDP-alpha-D-glucuronate: step 2/3. It functions in the pathway bacterial outer membrane biogenesis; lipopolysaccharide biosynthesis. Catalyzes the conversion of UDP-4-keto-arabinose (UDP-Ara4O) to UDP-4-amino-4-deoxy-L-arabinose (UDP-L-Ara4N). The modified arabinose is attached to lipid A and is required for resistance to polymyxin and cationic antimicrobial peptides. This chain is UDP-4-amino-4-deoxy-L-arabinose--oxoglutarate aminotransferase, found in Pseudomonas fluorescens (strain ATCC BAA-477 / NRRL B-23932 / Pf-5).